The chain runs to 625 residues: tRNA uridine 5-carboxymethylaminomethyl modification enzyme MnmG (625 aa).

Residues 13–18, V125, and S182 each bind FAD; that span reads GGGHAG. 276–290 contacts NAD(+); that stretch reads GPRYCPSIEDKITRF. Q373 is an FAD binding site.

This sequence belongs to the MnmG family. In terms of assembly, homodimer. Heterotetramer of two MnmE and two MnmG subunits. FAD is required as a cofactor.

The protein localises to the cytoplasm. Its function is as follows. NAD-binding protein involved in the addition of a carboxymethylaminomethyl (cmnm) group at the wobble position (U34) of certain tRNAs, forming tRNA-cmnm(5)s(2)U34. The sequence is that of tRNA uridine 5-carboxymethylaminomethyl modification enzyme MnmG from Lactococcus lactis subsp. lactis (strain IL1403) (Streptococcus lactis).